The chain runs to 286 residues: Putative cyclin-H (286 aa).

The 70-residue stretch at 79–148 (AIIYIKRFYL…ILESLNFNLI (70 aa)) folds into the Cyclin N-terminal domain. The segment at 235-286 (NNNNNNNNNNNNNNNNNNNNNNNNNNNNNNNNNNNNNNNNNNNNNNNNNLLL) is disordered.

The protein belongs to the cyclin family. Cyclin C subfamily.

The protein resides in the nucleus. May regulate cdk7 involved in transcription regulation and cell cycle progression. This chain is Putative cyclin-H (cycH), found in Dictyostelium discoideum (Social amoeba).